A 268-amino-acid polypeptide reads, in one-letter code: Undecaprenyl-diphosphatase (268 aa).

A run of 7 helical transmembrane segments spans residues 47–67, 85–105, 109–129, 144–164, 184–204, 217–237, and 246–266; these read FAVL…FSKL, IGVL…GGLI, LFNP…LLWV, FPLP…FPGV, AAEF…VYDL, LIVA…VKTF, and FALF…ALAL.

Belongs to the UppP family.

Its subcellular location is the cell inner membrane. The enzyme catalyses di-trans,octa-cis-undecaprenyl diphosphate + H2O = di-trans,octa-cis-undecaprenyl phosphate + phosphate + H(+). Catalyzes the dephosphorylation of undecaprenyl diphosphate (UPP). Confers resistance to bacitracin. In Rhodopseudomonas palustris (strain BisA53), this protein is Undecaprenyl-diphosphatase.